Consider the following 255-residue polypeptide: Pyridoxine 5'-phosphate synthase (255 aa).

3-amino-2-oxopropyl phosphate is bound by residues Asn8 and Arg19. The active-site Proton acceptor is His44. 1-deoxy-D-xylulose 5-phosphate is bound by residues Arg46 and His51. Residue Glu74 is the Proton acceptor of the active site. Residue Thr111 participates in 1-deoxy-D-xylulose 5-phosphate binding. Residue His202 is the Proton donor of the active site. Residues Asp203 and 225–226 (GH) each bind 3-amino-2-oxopropyl phosphate.

Belongs to the PNP synthase family. In terms of assembly, homooctamer; tetramer of dimers.

The protein resides in the cytoplasm. The catalysed reaction is 3-amino-2-oxopropyl phosphate + 1-deoxy-D-xylulose 5-phosphate = pyridoxine 5'-phosphate + phosphate + 2 H2O + H(+). It participates in cofactor biosynthesis; pyridoxine 5'-phosphate biosynthesis; pyridoxine 5'-phosphate from D-erythrose 4-phosphate: step 5/5. Catalyzes the complicated ring closure reaction between the two acyclic compounds 1-deoxy-D-xylulose-5-phosphate (DXP) and 3-amino-2-oxopropyl phosphate (1-amino-acetone-3-phosphate or AAP) to form pyridoxine 5'-phosphate (PNP) and inorganic phosphate. The polypeptide is Pyridoxine 5'-phosphate synthase (Xanthomonas axonopodis pv. citri (strain 306)).